The following is a 75-amino-acid chain: Large ribosomal subunit protein bL31c (75 aa).

Belongs to the bacterial ribosomal protein bL31 family. Type A subfamily. In terms of assembly, part of the 50S ribosomal subunit.

It localises to the plastid. It is found in the chloroplast. Its function is as follows. Binds the 23S rRNA. The chain is Large ribosomal subunit protein bL31c from Cyanidium caldarium (Red alga).